Reading from the N-terminus, the 402-residue chain is Endoglucanase 1 (402 aa).

Position 1 is a pyrrolidone carboxylic acid (Q1). 3 disulfide bridges follow: C18/C24, C51/C73, and C63/C69. N89 is a glycosylation site (N-linked (GlcNAc...) asparagine). 6 disulfide bridges follow: C140/C365, C172/C195, C176/C194, C215/C234, C223/C228, and C239/C315. E197 functions as the Nucleophile in the catalytic mechanism. E202 functions as the Proton donor in the catalytic mechanism. The N-linked (GlcNAc...) asparagine glycan is linked to N247.

This sequence belongs to the glycosyl hydrolase 7 (cellulase C) family. Monomer.

Its subcellular location is the secreted. The catalysed reaction is Endohydrolysis of (1-&gt;4)-beta-D-glucosidic linkages in cellulose, lichenin and cereal beta-D-glucans.. In terms of biological role, the biological conversion of cellulose to glucose generally requires three types of hydrolytic enzymes: (1) Endoglucanases which cut internal beta-1,4-glucosidic bonds; (2) Exocellobiohydrolases that cut the disaccharide cellobiose from the non-reducing end of the cellulose polymer chain; (3) Beta-1,4-glucosidases which hydrolyze the cellobiose and other short cello-oligosaccharides to glucose. In Humicola insolens (Soft-rot fungus), this protein is Endoglucanase 1 (CEL7B).